The sequence spans 345 residues: NADH-ubiquinone oxidoreductase chain 2 (345 aa).

9 helical membrane-spanning segments follow: residues 25–45 (HWLL…PLMT), 60–80 (FLTQ…NAWL), 99–119 (TIAI…PEVL), 149–171 (LNTP…GGLN), 178–198 (ILAF…PFSP), 199–219 (QLMI…FLVL), 242–262 (ALSL…GFVP), 282–302 (LALS…IVTL), and 324–344 (LLLS…PLTL).

Belongs to the complex I subunit 2 family. As to quaternary structure, core subunit of respiratory chain NADH dehydrogenase (Complex I) which is composed of 45 different subunits.

It is found in the mitochondrion inner membrane. The enzyme catalyses a ubiquinone + NADH + 5 H(+)(in) = a ubiquinol + NAD(+) + 4 H(+)(out). Functionally, core subunit of the mitochondrial membrane respiratory chain NADH dehydrogenase (Complex I) which catalyzes electron transfer from NADH through the respiratory chain, using ubiquinone as an electron acceptor. Essential for the catalytic activity and assembly of complex I. This is NADH-ubiquinone oxidoreductase chain 2 (mt-nd2) from Xenopus laevis (African clawed frog).